The chain runs to 290 residues: Ribosomal protein L11 methyltransferase (290 aa).

Residues Thr136, Gly157, Asp179, and Asn222 each contribute to the S-adenosyl-L-methionine site.

It belongs to the methyltransferase superfamily. PrmA family.

Its subcellular location is the cytoplasm. It carries out the reaction L-lysyl-[protein] + 3 S-adenosyl-L-methionine = N(6),N(6),N(6)-trimethyl-L-lysyl-[protein] + 3 S-adenosyl-L-homocysteine + 3 H(+). Methylates ribosomal protein L11. This Porphyromonas gingivalis (strain ATCC BAA-308 / W83) protein is Ribosomal protein L11 methyltransferase.